The sequence spans 193 residues: Flagellar transcriptional regulator FlhC (193 aa).

4 residues coordinate Zn(2+): C138, C141, C158, and C161.

It belongs to the FlhC family. In terms of assembly, heterohexamer composed of two FlhC and four FlhD subunits. Each FlhC binds a FlhD dimer, forming a heterotrimer, and a hexamer assembles by dimerization of two heterotrimers. Requires Zn(2+) as cofactor.

Its subcellular location is the cytoplasm. Its function is as follows. Functions in complex with FlhD as a master transcriptional regulator that regulates transcription of several flagellar and non-flagellar operons by binding to their promoter region. Activates expression of class 2 flagellar genes, including fliA, which is a flagellum-specific sigma factor that turns on the class 3 genes. Also regulates genes whose products function in a variety of physiological pathways. This Yersinia enterocolitica protein is Flagellar transcriptional regulator FlhC.